The sequence spans 397 residues: MGFRKILASKSHHSRHHNQHHKNLKLQNHRYVLISNITGSHETKYLSPFRMDNCSGSRRRDRLHVKLKSLRNKIHKQLHPNCRFDDATKTSDDKCVSYEVPERDGLATISLEEVFPKSNRCQIPEENLGETDSVIHRDLGNFANENDYPQWRKVESQYNLENVQPEEDEIVDRLRSEIRSTKLKSVKTTSRTLEKAIEARCTGKRVLQQLSCQSNQLTKIESNCDMLKIQSNVADRKIDELAHENRSLLALKSPNPFRKKREREKRDQIYNLKLKHRHLQQETMKRAQDSDKNLAINLSSEYGRYGQGVERQRILRDAQKYQFEADEEDNQMEIDLYGNLEQIKAVSGDLKIMAHAFGREFEAQNTRMFDIENNVQQADNALQAKRYRLEKVIGKRW.

Positions 1 to 26 (MGFRKILASKSHHSRHHNQHHKNLKL) are disordered. The interval 4 to 50 (RKILASKSHHSRHHNQHHKNLKLQNHRYVLISNITGSHETKYLSPFR) is inhibitory region. Over residues 10-26 (KSHHSRHHNQHHKNLKL) the composition is skewed to basic residues. Residues 51–95 (MDNCSGSRRRDRLHVKLKSLRNKIHKQLHPNCRFDDATKTSDDKC) are positive regulatory region. One can recognise a t-SNARE coiled-coil homology domain in the interval 330 to 392 (NQMEIDLYGN…QAKRYRLEKV (63 aa)).

Belongs to the SNAP-25 family. As to quaternary structure, interacts with the t-SNARE SSO1 and the v-SNARE SNC2.

The protein resides in the cell membrane. Its subcellular location is the prospore membrane. In terms of biological role, required to maintain the prospore membrane to the nucleus during sporulation in order to capture the daughter nuclei and form the spores. Mediates the fusion of exocytic vesicles with the plasma membrane during sporulation through its interactions with the t-SNARE SSO1 and v-SNARE SNC2. This Saccharomyces cerevisiae (strain ATCC 204508 / S288c) (Baker's yeast) protein is Sporulation-specific protein 20 (SPO20).